A 28-amino-acid chain; its full sequence is Potassium channel toxin alpha-KTx 9.5 (28 aa).

3 cysteine pairs are disulfide-bonded: Cys3–Cys19, Cys6–Cys24, and Cys10–Cys26. Position 28 is a valine amide (Val28).

Expressed by the venom gland.

Its subcellular location is the secreted. Its function is as follows. Blocks voltage-gated potassium channels Kv1.1/KCNA1 (IC(50)=145 nM), Kv1.2/KCNA2 (IC(50)=2.5 nM), and Kv1.3/KCNA3 (IC(50)=15). Also inhibits calcium-activated potassium channels (KCa/KCNN). The chain is Potassium channel toxin alpha-KTx 9.5 from Buthus occitanus tunetanus (Common European scorpion).